Here is a 298-residue protein sequence, read N- to C-terminus: Probable D,D-dipeptide transport system permease protein DdpC (298 aa).

At 1–33 the chain is on the cytoplasmic side; the sequence is MMLSEETSAVRPQKQTRFNGAKLVWMLKGSPLT. Residues 34 to 54 form a helical membrane-spanning segment; it reads VTSAVIIVLMLLMMIFSPWLA. The Periplasmic segment spans residues 55 to 96; it reads THDPNAIDLTARLLPPSAAHWFGTDEVGRDLFSRVLVGSQQS. The helical transmembrane segment at 97–117 threads the bilayer; it reads ILAGLVVVAIAGMIGSLLGCL. An ABC transmembrane type-1 domain is found at 97–282; sequence ILAGLVVVAI…LTAVGFNLFG (186 aa). The Cytoplasmic segment spans residues 118-124; the sequence is SGVLGGR. Helical transmembrane passes span 125-145 and 146-166; these read ADAI…LVLT and MALA…IAIV. Residues 167–217 are Cytoplasmic-facing; it reads RIPFYVRLARGQALVVRQYTYVQAAKTFGASRWHLINWHILRNSLPPLIVQ. Residues 218 to 238 form a helical membrane-spanning segment; sequence ASLDIGSAILMAATLGFIGLG. Topologically, residues 239–260 are periplasmic; it reads AQQPSAEWGAMVANGRNYVLDQ. The chain crosses the membrane as a helical span at residues 261 to 281; sequence WWYCAFPGAAILLTAVGFNLF. At 282-298 the chain is on the cytoplasmic side; the sequence is GDGIRDLLDPKAGGKQS.

It belongs to the binding-protein-dependent transport system permease family. OppBC subfamily. In terms of assembly, the complex is composed of two ATP-binding proteins (DdpD and DdpF), two transmembrane proteins (DdpB and DdpC) and a solute-binding protein (DdpA).

The protein resides in the cell inner membrane. Part of the ABC transporter complex DdpABCDF, which is probably involved in D,D-dipeptide transport. Probably responsible for the translocation of the substrate across the membrane. The protein is Probable D,D-dipeptide transport system permease protein DdpC (ddpC) of Escherichia coli (strain K12).